The primary structure comprises 297 residues: HTH-type transcriptional regulator ArgP (297 aa).

In terms of domain architecture, HTH lysR-type spans 4 to 60 (PDYRTLQALDAVIRERGFERAAQKLCITQSAVSQRIKQLENMFGQPLLVRTVPPRPT). Positions 21–40 (FERAAQKLCITQSAVSQRIK) form a DNA-binding region, H-T-H motif.

It belongs to the LysR transcriptional regulatory family. Homodimer.

Controls the transcription of genes involved in arginine and lysine metabolism. In Enterobacter sp. (strain 638), this protein is HTH-type transcriptional regulator ArgP.